We begin with the raw amino-acid sequence, 309 residues long: General transcription factor IIH subunit 3 (309 aa).

A C4-type zinc finger spans residues 269 to 286 (CSVCLSIFCNFSPICTTC).

It belongs to the TFB4 family. In terms of assembly, part of a TFIID-containing RNA polymerase II pre-initiation complex that is composed of TBP and at least GTF2A1, GTF2A2, GTF2E1, GTF2E2, GTF2F1, GTF2H2, GTF2H3, GTF2H4, GTF2H5, GTF2B, TCEA1, ERCC2, ERCC3, TAF1, TAF2, TAF3, TAF4, TAF5, TAF6, TAF7, TAF8, TAF9, TAF10, TAF11, TAF12 and TAF13. Component of the 7-subunit TFIIH core complex composed of XPB/ERCC3, XPD/ERCC2, GTF2H1, GTF2H2, GTF2H3, GTF2H4 and GTF2H5, which is active in NER. The core complex associates with the 3-subunit CDK-activating kinase (CAK) module composed of CCNH/cyclin H, CDK7 and MNAT1 to form the 10-subunit holoenzyme (holo-TFIIH) active in transcription. Interacts with RARA; the interaction requires prior phosphorylation of RARA on 'Ser-369' which then enhances interaction of RARA with CDK7.

The protein resides in the nucleus. Its function is as follows. Component of the general transcription and DNA repair factor IIH (TFIIH) core complex, which is involved in general and transcription-coupled nucleotide excision repair (NER) of damaged DNA and, when complexed to CAK, in RNA transcription by RNA polymerase II. In NER, TFIIH acts by opening DNA around the lesion to allow the excision of the damaged oligonucleotide and its replacement by a new DNA fragment. In transcription, TFIIH has an essential role in transcription initiation. When the pre-initiation complex (PIC) has been established, TFIIH is required for promoter opening and promoter escape. Phosphorylation of the C-terminal tail (CTD) of the largest subunit of RNA polymerase II by the kinase module CAK controls the initiation of transcription. The protein is General transcription factor IIH subunit 3 (Gtf2h3) of Mus musculus (Mouse).